The following is a 278-amino-acid chain: 2-dehydro-3-deoxyphosphooctonate aldolase (278 aa).

This sequence belongs to the KdsA family.

It is found in the cytoplasm. The catalysed reaction is D-arabinose 5-phosphate + phosphoenolpyruvate + H2O = 3-deoxy-alpha-D-manno-2-octulosonate-8-phosphate + phosphate. It functions in the pathway carbohydrate biosynthesis; 3-deoxy-D-manno-octulosonate biosynthesis; 3-deoxy-D-manno-octulosonate from D-ribulose 5-phosphate: step 2/3. The protein operates within bacterial outer membrane biogenesis; lipopolysaccharide biosynthesis. The chain is 2-dehydro-3-deoxyphosphooctonate aldolase from Koribacter versatilis (strain Ellin345).